Here is a 366-residue protein sequence, read N- to C-terminus: 3-isopropylmalate dehydrogenase (366 aa).

78–91 contributes to the NAD(+) binding site; it reads GPKWEDLPSHLQPE. Residues Arg-99, Arg-109, Arg-138, and Asp-227 each coordinate substrate. 3 residues coordinate Mg(2+): Asp-227, Asp-251, and Asp-255. 285-297 is a binding site for NAD(+); that stretch reads GSAPDIKGKNIAN.

The protein belongs to the isocitrate and isopropylmalate dehydrogenases family. LeuB type 1 subfamily. In terms of assembly, homodimer. The cofactor is Mg(2+). Requires Mn(2+) as cofactor.

Its subcellular location is the cytoplasm. It catalyses the reaction (2R,3S)-3-isopropylmalate + NAD(+) = 4-methyl-2-oxopentanoate + CO2 + NADH. Its pathway is amino-acid biosynthesis; L-leucine biosynthesis; L-leucine from 3-methyl-2-oxobutanoate: step 3/4. Functionally, catalyzes the oxidation of 3-carboxy-2-hydroxy-4-methylpentanoate (3-isopropylmalate) to 3-carboxy-4-methyl-2-oxopentanoate. The product decarboxylates to 4-methyl-2 oxopentanoate. The sequence is that of 3-isopropylmalate dehydrogenase from Buchnera aphidicola subsp. Baizongia pistaciae (strain Bp).